Reading from the N-terminus, the 62-residue chain is Protein sigN176 (62 aa).

The sequence is that of Protein sigN176 from Dictyostelium discoideum (Social amoeba).